Consider the following 225-residue polypeptide: NAD(P)H-quinone oxidoreductase subunit K, chloroplastic (225 aa).

[4Fe-4S] cluster contacts are provided by C43, C44, C108, and C139.

It belongs to the complex I 20 kDa subunit family. As to quaternary structure, NDH is composed of at least 16 different subunits, 5 of which are encoded in the nucleus. It depends on [4Fe-4S] cluster as a cofactor.

It localises to the plastid. The protein resides in the chloroplast thylakoid membrane. The enzyme catalyses a plastoquinone + NADH + (n+1) H(+)(in) = a plastoquinol + NAD(+) + n H(+)(out). It carries out the reaction a plastoquinone + NADPH + (n+1) H(+)(in) = a plastoquinol + NADP(+) + n H(+)(out). Functionally, NDH shuttles electrons from NAD(P)H:plastoquinone, via FMN and iron-sulfur (Fe-S) centers, to quinones in the photosynthetic chain and possibly in a chloroplast respiratory chain. The immediate electron acceptor for the enzyme in this species is believed to be plastoquinone. Couples the redox reaction to proton translocation, and thus conserves the redox energy in a proton gradient. The protein is NAD(P)H-quinone oxidoreductase subunit K, chloroplastic of Nymphaea alba (White water-lily).